The chain runs to 883 residues: Sodium/sulfate cotransporter 2 (883 aa).

The next 6 helical transmembrane spans lie at 3-23 (FGWQGSVSIAFTALAFVVMAA), 30-50 (VTFTVLLAFLTAFDGQIVTVA), 60-80 (GLLTVIFLYWVAEGITQTGGL), 106-126 (MCLSAFLNNTPCVTFMIPILI), 139-159 (LLIPLSYASVLGGTCTSIGTS), and 185-205 (IFDIAPYGVPYALWGFVFILL). 4 RCK C-terminal domains span residues 211–295 (LPGN…EFGL), 317–401 (VFTP…SKNN), 406–491 (VRAV…FPGL), and 497–583 (EQVD…DKSF). A run of 6 helical transmembrane segments spans residues 600–620 (MVIGVLLATGMVLTQIVGGLK), 624–644 (YIHLWPAAVLTSALMLLTGCM), 657–677 (VYLTIAAAFGVSAALEGTGVA), 693–713 (SDGAALIAIYIATAMLSELLT), 774–794 (FAIIGAPFQIWLMIVAGFILC), and 802–822 (VWIVSWICTAGIVLLPALYFL). Residues 857-883 (QASRTGSDGTGSSDSPRALGVPKVITA) form a disordered region. The span at 861-871 (TGSDGTGSSDS) shows a compositional bias: low complexity.

The protein belongs to the divalent anion:Na+ symporter (DASS) superfamily. Na+/sulfate symporter (TC 2.A.47.4) family.

Its subcellular location is the cell membrane. Its function is as follows. Na(+)/sulfate cotransporter with a probable high-affinity for sulfate and a proteasome dependent turnover. The protein is Sodium/sulfate cotransporter 2 (SLT2) of Chlamydomonas reinhardtii (Chlamydomonas smithii).